The following is a 103-amino-acid chain: Histone H4 (103 aa).

Over residues 1–14 the composition is skewed to gly residues; that stretch reads MSGRGKGGKGLGKG. The disordered stretch occupies residues 1–20; the sequence is MSGRGKGGKGLGKGGAKRHR. Residues 17-21 mediate DNA binding; that stretch reads KRHRK.

The protein belongs to the histone H4 family. The nucleosome is a histone octamer containing two molecules each of H2A, H2B, H3 and H4 assembled in one H3-H4 heterotetramer and two H2A-H2B heterodimers. The octamer wraps approximately 147 bp of DNA.

It is found in the nucleus. Its subcellular location is the chromosome. Its function is as follows. Core component of nucleosome. Nucleosomes wrap and compact DNA into chromatin, limiting DNA accessibility to the cellular machineries which require DNA as a template. Histones thereby play a central role in transcription regulation, DNA repair, DNA replication and chromosomal stability. DNA accessibility is regulated via a complex set of post-translational modifications of histones, also called histone code, and nucleosome remodeling. The protein is Histone H4 (H4-I) of Chlamydomonas reinhardtii (Chlamydomonas smithii).